The sequence spans 188 residues: dTTP/UTP pyrophosphatase (188 aa).

Aspartate 70 serves as the catalytic Proton acceptor.

This sequence belongs to the Maf family. YhdE subfamily. It depends on a divalent metal cation as a cofactor.

The protein resides in the cytoplasm. It catalyses the reaction dTTP + H2O = dTMP + diphosphate + H(+). The catalysed reaction is UTP + H2O = UMP + diphosphate + H(+). Its function is as follows. Nucleoside triphosphate pyrophosphatase that hydrolyzes dTTP and UTP. May have a dual role in cell division arrest and in preventing the incorporation of modified nucleotides into cellular nucleic acids. In Clostridium botulinum (strain Alaska E43 / Type E3), this protein is dTTP/UTP pyrophosphatase.